The sequence spans 378 residues: Flagellar P-ring protein 2 (378 aa).

The N-terminal stretch at 1 to 33 (MHEVSDKTNAIHPLQRVSRALFALGLLCFAAMA) is a signal peptide.

This sequence belongs to the FlgI family. As to quaternary structure, the basal body constitutes a major portion of the flagellar organelle and consists of four rings (L,P,S, and M) mounted on a central rod.

Its subcellular location is the periplasm. The protein resides in the bacterial flagellum basal body. In terms of biological role, assembles around the rod to form the L-ring and probably protects the motor/basal body from shearing forces during rotation. This Hahella chejuensis (strain KCTC 2396) protein is Flagellar P-ring protein 2.